The primary structure comprises 322 residues: TFHKPVSGASALPHIGPPPHLHRSFAATTMLSKLQSISVKARRVELARDITRPKVCLHAQRCSLVRLRVAAPQTEEALGTVQAAGAGDEHSADVALQQLDRAIAERRARRKREQLSYQAAAIAASIGVSGIAIFATYLRFAMHMTVGGAVPWGEVAGTLLLVVGGALGMEMYARYAHKAIWHESPLGWLLHKSHHTPRTGPFEANDLFAIINGLPAMLLCTFGFWLPNVLGAACFGAGLGITLYGMAYMFVHDGLVHRRFPTGPIAGLPYMKRLTVAHQLHHSGKYGGAPWGMFLGPQELQHIPGAAEEVERLVLELDWSKR.

The transit peptide at 1 to 68 (TFHKPVSGAS…AQRCSLVRLR (68 aa)) directs the protein to the chloroplast. A run of 2 helical transmembrane segments spans residues 118–138 (QAAA…ATYL) and 149–169 (AVPW…ALGM). In terms of domain architecture, Fatty acid hydroxylase spans 164–286 (GGALGMEMYA…AHQLHHSGKY (123 aa)). The Histidine box-1 signature appears at 177 to 182 (HKAIWH). The Histidine box-2 motif lies at 191–195 (HKSHH). The next 2 membrane-spanning stretches (helical) occupy residues 207 to 227 (LFAI…FWLP) and 231 to 251 (GAAC…YMFV). The Histidine box-3 signature appears at 252–257 (HDGLVH). Residues 278–282 (HQLHH) carry the Histidine box-4 motif.

Belongs to the sterol desaturase family.

The protein localises to the plastid. The protein resides in the chloroplast membrane. The catalysed reaction is all-trans-beta-carotene + 4 reduced [2Fe-2S]-[ferredoxin] + 2 O2 + 4 H(+) = all-trans-zeaxanthin + 4 oxidized [2Fe-2S]-[ferredoxin] + 2 H2O. Functionally, nonheme diiron monooxygenase involved in the biosynthesis of astaxanthin. Hydroxylates beta-ring of beta-carotene and catalyzes the conversion of canthaxanthin to astaxanthin. Uses ferredoxin as an electron donor. In Haematococcus lacustris (Green alga), this protein is Beta-carotene 3-hydroxylase, chloroplastic (CRTZ).